Consider the following 148-residue polypeptide: uncharacterized protein (148 aa).

In terms of domain architecture, N-acetyltransferase spans 7–148; it reads LEINYKTDEL…HDVLLWKPIR (142 aa).

This is an uncharacterized protein from Staphylococcus aureus (strain Mu50 / ATCC 700699).